The chain runs to 113 residues: PTS system fructose-like EIIB component 3 (113 aa).

The PTS EIIB type-2 domain occupies Met1–Lys100. The active-site Phosphocysteine intermediate is Cys10. Cys10 carries the phosphocysteine; by EIIA modification.

Its subcellular location is the cytoplasm. The enzyme catalyses D-fructose(out) + N(pros)-phospho-L-histidyl-[protein] = D-fructose 1-phosphate(in) + L-histidyl-[protein]. Its function is as follows. The phosphoenolpyruvate-dependent sugar phosphotransferase system (sugar PTS), a major carbohydrate active transport system, catalyzes the phosphorylation of incoming sugar substrates concomitantly with their translocation across the cell membrane. This chain is PTS system fructose-like EIIB component 3 (frwD), found in Escherichia coli (strain K12).